Consider the following 150-residue polypeptide: UPF0756 membrane protein ECA1265 (150 aa).

Transmembrane regions (helical) follow at residues 1–21 (MAYIDPTLLILLVLAGLGIIS), 51–71 (YGLSIGIVVLTIGVMAPIASG), 82–102 (FLHWKSLLAILIGVAVSWLGG), and 127–147 (ALFRGVPVGPLIAAGLLSLLI).

This sequence belongs to the UPF0756 family.

The protein resides in the cell membrane. The polypeptide is UPF0756 membrane protein ECA1265 (Pectobacterium atrosepticum (strain SCRI 1043 / ATCC BAA-672) (Erwinia carotovora subsp. atroseptica)).